Reading from the N-terminus, the 563-residue chain is 2-isopropylmalate synthase (563 aa).

In terms of domain architecture, Pyruvate carboxyltransferase spans 31–305; that stretch reads PIWMSTDLRD…DPGLDFAQIN (275 aa). 4 residues coordinate Mg(2+): D40, H244, H246, and N280. Positions 437–563 are regulatory domain; sequence RAEPIEYLSH…EWARLCGGAE (127 aa).

This sequence belongs to the alpha-IPM synthase/homocitrate synthase family. LeuA type 2 subfamily. As to quaternary structure, homodimer. Requires Mg(2+) as cofactor.

It is found in the cytoplasm. The catalysed reaction is 3-methyl-2-oxobutanoate + acetyl-CoA + H2O = (2S)-2-isopropylmalate + CoA + H(+). It functions in the pathway amino-acid biosynthesis; L-leucine biosynthesis; L-leucine from 3-methyl-2-oxobutanoate: step 1/4. Functionally, catalyzes the condensation of the acetyl group of acetyl-CoA with 3-methyl-2-oxobutanoate (2-ketoisovalerate) to form 3-carboxy-3-hydroxy-4-methylpentanoate (2-isopropylmalate). In Parvibaculum lavamentivorans (strain DS-1 / DSM 13023 / NCIMB 13966), this protein is 2-isopropylmalate synthase.